A 216-amino-acid polypeptide reads, in one-letter code: Dimethylamine corrinoid protein 2 (216 aa).

The 91-residue stretch at 1-91 (MASKEELLQE…EMPAGTETKK (91 aa)) folds into the B12-binding N-terminal domain. A B12-binding domain is found at 92 to 216 (LGVIVNGTVE…AKAKELLLGK (125 aa)). His105 provides a ligand contact to methylcob(III)alamin.

It belongs to the methylamine corrinoid protein family.

It functions in the pathway one-carbon metabolism; methanogenesis from dimethylamine. In terms of biological role, acts as a methyl group carrier between MtbB and MtbA. The protein is Dimethylamine corrinoid protein 2 (mtbC2) of Methanosarcina acetivorans (strain ATCC 35395 / DSM 2834 / JCM 12185 / C2A).